The primary structure comprises 419 residues: Farnesyl pyrophosphate synthase (419 aa).

Met-1 is modified (N-acetylmethionine). Positions 123, 126, and 162 each coordinate isopentenyl diphosphate. Lys-123 carries the post-translational modification N6-(2-hydroxyisobutyryl)lysine; alternate. Lys-123 is subject to N6-acetyllysine; alternate. Mg(2+) contacts are provided by Asp-169 and Asp-173. Arg-178 contributes to the dimethylallyl diphosphate binding site. Arg-179 is a binding site for isopentenyl diphosphate. Residues Lys-266, Thr-267, Gln-306, Lys-323, and Lys-332 each contribute to the dimethylallyl diphosphate site. The residue at position 353 (Lys-353) is an N6-acetyllysine.

This sequence belongs to the FPP/GGPP synthase family. Homodimer. Interacts with RSAD2. In terms of assembly, (Microbial infection) Interacts with HTLV-1 protein p13(II). Mg(2+) is required as a cofactor.

The protein resides in the cytoplasm. The enzyme catalyses isopentenyl diphosphate + dimethylallyl diphosphate = (2E)-geranyl diphosphate + diphosphate. The catalysed reaction is isopentenyl diphosphate + (2E)-geranyl diphosphate = (2E,6E)-farnesyl diphosphate + diphosphate. The protein operates within isoprenoid biosynthesis; farnesyl diphosphate biosynthesis; farnesyl diphosphate from geranyl diphosphate and isopentenyl diphosphate: step 1/1. It functions in the pathway isoprenoid biosynthesis; geranyl diphosphate biosynthesis; geranyl diphosphate from dimethylallyl diphosphate and isopentenyl diphosphate: step 1/1. Its activity is regulated as follows. Inactivated by interferon-induced RSAD2. This inactivation may result of disruption of lipid rafts at the plasma membrane, and thus have an antiviral effect since many enveloped viruses need lipid rafts to bud efficiently out of the cell. Key enzyme in isoprenoid biosynthesis which catalyzes the formation of farnesyl diphosphate (FPP), a precursor for several classes of essential metabolites including sterols, dolichols, carotenoids, and ubiquinones. FPP also serves as substrate for protein farnesylation and geranylgeranylation. Catalyzes the sequential condensation of isopentenyl pyrophosphate with the allylic pyrophosphates, dimethylallyl pyrophosphate, and then with the resultant geranylpyrophosphate to the ultimate product farnesyl pyrophosphate. This chain is Farnesyl pyrophosphate synthase, found in Homo sapiens (Human).